Consider the following 220-residue polypeptide: Cytidylate kinase (220 aa).

9–17 is a binding site for ATP; sequence GPAASGKST.

It belongs to the cytidylate kinase family. Type 1 subfamily.

It is found in the cytoplasm. The enzyme catalyses CMP + ATP = CDP + ADP. The catalysed reaction is dCMP + ATP = dCDP + ADP. In Thermotoga neapolitana (strain ATCC 49049 / DSM 4359 / NBRC 107923 / NS-E), this protein is Cytidylate kinase.